Reading from the N-terminus, the 527-residue chain is Beta-glucosidase 19 (527 aa).

A signal peptide spans 1 to 21; it reads MKIPLLGLLLLISLVGSPTRA. Residues glutamine 52 and histidine 155 each coordinate a beta-D-glucoside. A glycan (N-linked (GlcNAc...) asparagine) is linked at asparagine 183. 200–201 contacts a beta-D-glucoside; the sequence is NE. The active-site Proton donor is glutamate 201. A disulfide bridge connects residues cysteine 220 and cysteine 231. Positions 345 and 418 each coordinate a beta-D-glucoside. Residue glutamate 418 is the Nucleophile of the active site. Residue asparagine 462 is glycosylated (N-linked (GlcNAc...) asparagine). A beta-D-glucoside-binding positions include tryptophan 469, 476–477, and phenylalanine 485; that span reads EW. Asparagine 495 carries N-linked (GlcNAc...) asparagine glycosylation. The Prevents secretion from ER signature appears at 524–527; it reads HEEL.

The protein belongs to the glycosyl hydrolase 1 family.

The protein resides in the endoplasmic reticulum lumen. It catalyses the reaction Hydrolysis of terminal, non-reducing beta-D-glucosyl residues with release of beta-D-glucose.. The polypeptide is Beta-glucosidase 19 (Arabidopsis thaliana (Mouse-ear cress)).